A 310-amino-acid chain; its full sequence is N-acetyl-gamma-glutamyl-phosphate reductase (310 aa).

Residue Cys116 is part of the active site.

The protein belongs to the NAGSA dehydrogenase family. Type 2 subfamily.

The protein resides in the cytoplasm. It carries out the reaction N-acetyl-L-glutamate 5-semialdehyde + phosphate + NADP(+) = N-acetyl-L-glutamyl 5-phosphate + NADPH + H(+). The protein operates within amino-acid biosynthesis; L-arginine biosynthesis; N(2)-acetyl-L-ornithine from L-glutamate: step 3/4. Its function is as follows. Catalyzes the NADPH-dependent reduction of N-acetyl-5-glutamyl phosphate to yield N-acetyl-L-glutamate 5-semialdehyde. The protein is N-acetyl-gamma-glutamyl-phosphate reductase of Chelativorans sp. (strain BNC1).